Reading from the N-terminus, the 95-residue chain is Large ribosomal subunit protein bL28 (95 aa).

The protein belongs to the bacterial ribosomal protein bL28 family.

The polypeptide is Large ribosomal subunit protein bL28 (Zymomonas mobilis subsp. mobilis (strain ATCC 31821 / ZM4 / CP4)).